The following is a 546-amino-acid chain: CTP synthase (546 aa).

An amidoligase domain region spans residues 1–266; that stretch reads MARYIFITGG…DTEVLDVFGL (266 aa). Ser-13 serves as a coordination point for CTP. UTP is bound at residue Ser-13. 14-19 lines the ATP pocket; the sequence is SLGKGL. Position 54 (Tyr-54) interacts with L-glutamine. Residue Asp-71 coordinates ATP. Residues Asp-71 and Glu-140 each coordinate Mg(2+). CTP-binding positions include 147 to 149, 187 to 192, and Lys-223; these read DIE and KTKPTQ. UTP is bound by residues 187-192 and Lys-223; that span reads KTKPTQ. Residues 293–545 enclose the Glutamine amidotransferase type-1 domain; sequence NIAIVGKYTG…IGAAKERSRL (253 aa). Ala-357 provides a ligand contact to L-glutamine. Cys-384 (nucleophile; for glutamine hydrolysis) is an active-site residue. L-glutamine-binding positions include 385–388, Glu-408, and Arg-473; that span reads FGMQ. Active-site residues include His-518 and Glu-520.

The protein belongs to the CTP synthase family. In terms of assembly, homotetramer.

It catalyses the reaction UTP + L-glutamine + ATP + H2O = CTP + L-glutamate + ADP + phosphate + 2 H(+). It carries out the reaction L-glutamine + H2O = L-glutamate + NH4(+). The catalysed reaction is UTP + NH4(+) + ATP = CTP + ADP + phosphate + 2 H(+). The protein operates within pyrimidine metabolism; CTP biosynthesis via de novo pathway; CTP from UDP: step 2/2. With respect to regulation, allosterically activated by GTP, when glutamine is the substrate; GTP has no effect on the reaction when ammonia is the substrate. The allosteric effector GTP functions by stabilizing the protein conformation that binds the tetrahedral intermediate(s) formed during glutamine hydrolysis. Inhibited by the product CTP, via allosteric rather than competitive inhibition. In terms of biological role, catalyzes the ATP-dependent amination of UTP to CTP with either L-glutamine or ammonia as the source of nitrogen. Regulates intracellular CTP levels through interactions with the four ribonucleotide triphosphates. In Phenylobacterium zucineum (strain HLK1), this protein is CTP synthase.